The sequence spans 702 residues: Phosphoglycerol transferase I (702 aa).

The next 3 membrane-spanning stretches (helical) occupy residues 5-24 (LLVSLLLLLWLLVASPRLAW), 73-95 (GYIAVFVGMLLLSLSPLLLVRIR), and 102-124 (GGGAVFAGFVGMLLVGIAASPLY).

Belongs to the OpgB family.

The protein localises to the cell inner membrane. It catalyses the reaction a phosphatidylglycerol + a membrane-derived-oligosaccharide D-glucose = a 1,2-diacyl-sn-glycerol + a membrane-derived-oligosaccharide 6-(glycerophospho)-D-glucose.. It functions in the pathway glycan metabolism; osmoregulated periplasmic glucan (OPG) biosynthesis. In terms of biological role, transfers a phosphoglycerol residue from phosphatidylglycerol to the membrane-bound nascent glucan backbones. This is Phosphoglycerol transferase I from Xanthomonas axonopodis pv. citri (strain 306).